Here is a 375-residue protein sequence, read N- to C-terminus: Fasciculation and elongation protein zeta-2 (375 aa).

A disordered region spans residues 1-42 (MAADGDWQDFYEFQEPAGSVRDQENCNASPEAGAGAHAGGDS). Phosphoserine is present on residues Ser-130, Ser-171, and Ser-190. Positions 156–177 (TADQVIEEIEEMMQESPDLEDD) form a coiled coil. A coiled-coil region spans residues 206–281 (ERVKRLSVSE…AKKKKKLKNG (76 aa)). The tract at residues 265-297 (QKEHKETAKKKKKLKNGSSQNGRNERSHMPGTR) is disordered.

It belongs to the zygin family. Homodimer; disulfide-linked. May form heterodimers with FEZ1. Interacts with synaptotagmin.

Functionally, involved in axonal outgrowth and fasciculation. This Rattus norvegicus (Rat) protein is Fasciculation and elongation protein zeta-2 (Fez2).